We begin with the raw amino-acid sequence, 1127 residues long: Inactive phospholipase C-like protein 2 (1127 aa).

The span at 1 to 11 (MAECGRGGAAG) shows a compositional bias: gly residues. The disordered stretch occupies residues 1-128 (MAECGRGGAA…KKTVSFSSMP (128 aa)). Ala2 is subject to N-acetylalanine. The residue at position 17 (Ser17) is a Phosphoserine. Low complexity predominate over residues 19–31 (GPALGAKGALKAG). Positions 32–42 (VGEGGGGGGRL) are enriched in gly residues. At Thr84 the chain carries Phosphothreonine. In terms of domain architecture, PH spans 141 to 251 (NSMVEGSELK…WVTGLRYLIS (111 aa)). Positions 426–570 (QDMKQPLSHY…LKGKILIKAK (145 aa)) constitute a PI-PLC X-box domain. Position 584 is a phosphothreonine (Thr584). The region spanning 618–734 (LSELVSICKS…GYVLRPAIMR (117 aa)) is the PI-PLC Y-box domain. One can recognise a C2 domain in the interval 734-863 (REEVSFFSAN…TGYRHVPLQS (130 aa)). A disordered region spans residues 1101 to 1127 (GTENADVQKPRRSLEVIPEKANDETGE). Positions 1106-1127 (DVQKPRRSLEVIPEKANDETGE) are enriched in basic and acidic residues. Ser1113 bears the Phosphoserine mark.

It localises to the cytoplasm. Its function is as follows. May play an role in the regulation of Ins(1,4,5)P3 around the endoplasmic reticulum. The chain is Inactive phospholipase C-like protein 2 (PLCL2) from Homo sapiens (Human).